A 181-amino-acid polypeptide reads, in one-letter code: ATP-dependent protease subunit HslV (181 aa).

The active site involves Thr-11. 3 residues coordinate Na(+): Ala-166, Cys-169, and Thr-172.

This sequence belongs to the peptidase T1B family. HslV subfamily. In terms of assembly, a double ring-shaped homohexamer of HslV is capped on each side by a ring-shaped HslU homohexamer. The assembly of the HslU/HslV complex is dependent on binding of ATP.

It localises to the cytoplasm. The enzyme catalyses ATP-dependent cleavage of peptide bonds with broad specificity.. With respect to regulation, allosterically activated by HslU binding. In terms of biological role, protease subunit of a proteasome-like degradation complex believed to be a general protein degrading machinery. The chain is ATP-dependent protease subunit HslV from Chlorobaculum tepidum (strain ATCC 49652 / DSM 12025 / NBRC 103806 / TLS) (Chlorobium tepidum).